A 73-amino-acid polypeptide reads, in one-letter code: Large ribosomal subunit protein bL28 (73 aa).

This sequence belongs to the bacterial ribosomal protein bL28 family.

The sequence is that of Large ribosomal subunit protein bL28 from Fervidobacterium nodosum (strain ATCC 35602 / DSM 5306 / Rt17-B1).